The sequence spans 954 residues: MAAEPRRVSFRDGRLASRKAEEAALRRHQAATWLESVIGPFGLSRCPSEQEFVAAVRNGIVLCKAINKIQPGAVPKVVANASCDSQPSTAFQYFENIRNFLVAVQELKLPCFEASDLEKDNIDAGSVGKIVDCVISLKSYHEWRQRGGSYGHLKHLKSPLATRSASHVQSEYVCSGSSSTPKRLDLVETDTERQPNQNVGPNCQEAMERLQKVILDCMISCKENLDNDSLKKDPYKLVGTILSRQLEKEQSSNSQVENRRRLLQAQESELLELKSMFQEVKIDFRTLKTQFQDDIIKLGDNVQGLSKAALGYNQAVKENKSLYNLLQELRGNIRVFCRIRPLINSESISSIEHIGNDGSIMVCDPLKPQTTRKIFQFNKIFGPTTTQDEVYKETQYLIRSVMDGYNVCIFAYGQTGSGKTHTMCGPSGGLSSQDLGISYMALNDLFKTSTSREDVKYDIHVQMVEIYNEQVRDLLNEDTSNIRTSSNGLLNLPDAKKCPVQSPSDVINLMLLGEKHRASSPTAMNHRSSRSHSILTVHVNGKDMSGNVTRSSLHLVDLAGSERVDRSEATGDRLKEAQHINKSLSCLGDVITALAQKNSHIPYRNSKLTQLLQSSLGGNAKTLMFAHISPEADSYVETLSTLKFAQRASCVELGTAHANKESNEIRELKEQVENLKRALAAKELEKSSFKLKENTVVRERAKQVPERTPPRPRRLSLENTGIGKGSIPDRKGPKSPLSVTKLNRDHATIHDSIDGFNHHIMHQGSVMQMSATSSEDPVREETEKIITTVDTVPFCGLHPDAYISSKQSGLDTLLRTPCRSRNLNLEVGQTDEPSSSAKLEKMTSSNATKKGSHLRKSIQSSIGKLIHGSERRNVQHLGQATPAKIANSTNNDVPSSITPDLRLRRRQSLTGLPPPPSTMSRRSSLGGKSDIGSDKRGAKTPPPVNSAAKAKRWL.

A Calponin-homology (CH) domain is found at 24-142 (ALRRHQAATW…CVISLKSYHE (119 aa)). A coiled-coil region spans residues 242–293 (LSRQLEKEQSSNSQVENRRRLLQAQESELLELKSMFQEVKIDFRTLKTQFQD). The 320-residue stretch at 332–651 (NIRVFCRIRP…LKFAQRASCV (320 aa)) folds into the Kinesin motor domain. 413–420 (GQTGSGKT) contributes to the ATP binding site. Residues 656-692 (AHANKESNEIRELKEQVENLKRALAAKELEKSSFKLK) are a coiled coil. Residues 697-709 (VRERAKQVPERTP) show a composition bias toward basic and acidic residues. Disordered regions lie at residues 697–743 (VRER…TKLN), 824–858 (NLEV…RKSI), and 882–954 (PAKI…KRWL). 2 stretches are compositionally biased toward polar residues: residues 831-849 (DEPS…NATK) and 886-898 (ANST…SSIT).

It belongs to the TRAFAC class myosin-kinesin ATPase superfamily. Kinesin family. KIN-14 subfamily.

The protein is Kinesin-like protein KIN-14A of Oryza sativa subsp. japonica (Rice).